Here is a 184-residue protein sequence, read N- to C-terminus: Thymidine kinase (184 aa).

ATP-binding positions include 10-17 and 83-86; these read GPMYSGKT and DEVQ. Glu84 (proton acceptor) is an active-site residue. Residues Cys140, Cys143, Cys173, and Cys176 each coordinate Zn(2+).

The protein belongs to the thymidine kinase family. Homotetramer.

The protein resides in the cytoplasm. The catalysed reaction is thymidine + ATP = dTMP + ADP + H(+). The chain is Thymidine kinase from Thermotoga petrophila (strain ATCC BAA-488 / DSM 13995 / JCM 10881 / RKU-1).